We begin with the raw amino-acid sequence, 347 residues long: S-adenosylmethionine:tRNA ribosyltransferase-isomerase (347 aa).

It belongs to the QueA family. As to quaternary structure, monomer.

Its subcellular location is the cytoplasm. It catalyses the reaction 7-aminomethyl-7-carbaguanosine(34) in tRNA + S-adenosyl-L-methionine = epoxyqueuosine(34) in tRNA + adenine + L-methionine + 2 H(+). It functions in the pathway tRNA modification; tRNA-queuosine biosynthesis. Transfers and isomerizes the ribose moiety from AdoMet to the 7-aminomethyl group of 7-deazaguanine (preQ1-tRNA) to give epoxyqueuosine (oQ-tRNA). This Pseudomonas aeruginosa (strain ATCC 15692 / DSM 22644 / CIP 104116 / JCM 14847 / LMG 12228 / 1C / PRS 101 / PAO1) protein is S-adenosylmethionine:tRNA ribosyltransferase-isomerase.